A 312-amino-acid polypeptide reads, in one-letter code: Small ribosomal subunit biogenesis GTPase RsgA (312 aa).

The 160-residue stretch at 86-245 (QSFLKRPAVA…LADTPGFNRP (160 aa)) folds into the CP-type G domain. GTP contacts are provided by residues 135–138 (TKID) and 187–195 (GPSGVGKTS). Zn(2+) is bound by residues C270, C275, H277, and C283.

It belongs to the TRAFAC class YlqF/YawG GTPase family. RsgA subfamily. Monomer. Associates with 30S ribosomal subunit, binds 16S rRNA. Requires Zn(2+) as cofactor.

It is found in the cytoplasm. Its function is as follows. One of several proteins that assist in the late maturation steps of the functional core of the 30S ribosomal subunit. Helps release RbfA from mature subunits. May play a role in the assembly of ribosomal proteins into the subunit. Circularly permuted GTPase that catalyzes slow GTP hydrolysis, GTPase activity is stimulated by the 30S ribosomal subunit. The protein is Small ribosomal subunit biogenesis GTPase RsgA of Prochlorococcus marinus (strain NATL2A).